We begin with the raw amino-acid sequence, 87 residues long: MSAPDILKDFKGSLTIEQDGSISSASGILQESFYNNKEFASTIISMLHDVNKITSSNNQEFKRMTVSFSEQTFIVTAIGTKIYVVVQ.

It belongs to the LAMTOR4 family. Part of the Ragulator complex.

The protein localises to the lysosome. Functionally, regulator of the TOR pathway, a signaling cascade that promotes cell growth in response to growth factors, energy levels, and amino acids. As part of the Ragulator complex, may activate the TOR signaling cascade in response to amino acids. The sequence is that of Ragulator complex protein LAMTOR4 homolog from Dictyostelium discoideum (Social amoeba).